We begin with the raw amino-acid sequence, 238 residues long: Orotidine 5'-phosphate decarboxylase (238 aa).

Substrate-binding positions include D18, K40, 67-76 (DMKLLDIDNT), T122, R183, Q192, and R213. K69 (proton donor) is an active-site residue.

Belongs to the OMP decarboxylase family. Type 1 subfamily. In terms of assembly, homodimer.

The enzyme catalyses orotidine 5'-phosphate + H(+) = UMP + CO2. It participates in pyrimidine metabolism; UMP biosynthesis via de novo pathway; UMP from orotate: step 2/2. Its function is as follows. Catalyzes the decarboxylation of orotidine 5'-monophosphate (OMP) to uridine 5'-monophosphate (UMP). This is Orotidine 5'-phosphate decarboxylase from Brucella canis (strain ATCC 23365 / NCTC 10854 / RM-666).